A 215-amino-acid chain; its full sequence is Large ribosomal subunit protein uL1 (215 aa).

Belongs to the universal ribosomal protein uL1 family. Part of the 50S ribosomal subunit.

Its function is as follows. Binds directly to 23S rRNA. Probably involved in E site tRNA release. In terms of biological role, protein L1 is also a translational repressor protein, it controls the translation of its operon by binding to its mRNA. The sequence is that of Large ribosomal subunit protein uL1 from Cenarchaeum symbiosum (strain A).